The sequence spans 378 residues: UDP-4-amino-4-deoxy-L-arabinose--oxoglutarate aminotransferase (378 aa).

N6-(pyridoxal phosphate)lysine is present on K182.

Belongs to the DegT/DnrJ/EryC1 family. ArnB subfamily. Homodimer. The cofactor is pyridoxal 5'-phosphate.

It carries out the reaction UDP-4-amino-4-deoxy-beta-L-arabinose + 2-oxoglutarate = UDP-beta-L-threo-pentopyranos-4-ulose + L-glutamate. It participates in nucleotide-sugar biosynthesis; UDP-4-deoxy-4-formamido-beta-L-arabinose biosynthesis; UDP-4-deoxy-4-formamido-beta-L-arabinose from UDP-alpha-D-glucuronate: step 2/3. It functions in the pathway bacterial outer membrane biogenesis; lipopolysaccharide biosynthesis. In terms of biological role, catalyzes the conversion of UDP-4-keto-arabinose (UDP-Ara4O) to UDP-4-amino-4-deoxy-L-arabinose (UDP-L-Ara4N). The modified arabinose is attached to lipid A and is required for resistance to polymyxin and cationic antimicrobial peptides. The sequence is that of UDP-4-amino-4-deoxy-L-arabinose--oxoglutarate aminotransferase from Aeromonas hydrophila subsp. hydrophila (strain ATCC 7966 / DSM 30187 / BCRC 13018 / CCUG 14551 / JCM 1027 / KCTC 2358 / NCIMB 9240 / NCTC 8049).